The primary structure comprises 444 residues: Putative methylesterase 13, chloroplastic (444 aa).

Disordered stretches follow at residues 1 to 32 (MGNSFTCISHEQEQRPKKSSGGGGNNSGKYKY), 49 to 90 (PSLS…KDSH), and 124 to 176 (SVVY…QLVD). The N-terminal 60 residues, 1–60 (MGNSFTCISHEQEQRPKKSSGGGGNNSGKYKYVRRLSLMPSFRRRTLLPSLSCSGSSSTS), are a transit peptide targeting the chloroplast. Over residues 49 to 64 (PSLSCSGSSSTSSSKK) the composition is skewed to low complexity. Residues 65–82 (GGIKAKTKKIRERHHHHH) show a composition bias toward basic residues. Polar residues predominate over residues 124–148 (SVVYPSAQPSGTSSGPVSAVQTPKK). Positions 149–164 (SSAGFVRSSSSRQRSS) are enriched in low complexity. Residues 190 to 310 (FVLVHGGGFG…LFNQQLGSND (121 aa)) form the AB hydrolase-1 domain. The active-site Acyl-ester intermediate is the D264. Catalysis depends on charge relay system residues D390 and H418.

The protein belongs to the AB hydrolase superfamily. Methylesterase family.

It localises to the plastid. Its subcellular location is the chloroplast. Its function is as follows. Putative methylesterase. This Arabidopsis thaliana (Mouse-ear cress) protein is Putative methylesterase 13, chloroplastic.